Consider the following 342-residue polypeptide: P2Y purinoceptor 12 (342 aa).

Residues 1–27 (MQAIDNLTSAPGNTSLCTRDYKITQVL) lie on the Extracellular side of the membrane. 2 N-linked (GlcNAc...) asparagine glycosylation sites follow: asparagine 6 and asparagine 13. 2 cysteine pairs are disulfide-bonded: cysteine 17–cysteine 270 and cysteine 97–cysteine 175. A helical membrane pass occupies residues 28 to 50 (FPLLYTVLFFVGLITNSLAMRIF). Residues 51–61 (FQIRSKSNFII) lie on the Cytoplasmic side of the membrane. Residues serine 55 and serine 57 each carry the phosphoserine modification. Residues 62–82 (FLKNTVISDLLMILTFPFKIL) traverse the membrane as a helical segment. Residues 83-97 (SDAKLGAGPLRTFVC) lie on the Extracellular side of the membrane. The ADP site is built by arginine 93, cysteine 97, and tyrosine 105. A helical membrane pass occupies residues 98-118 (QVTSVIFYFTMYISISFLGLI). Residues 119 to 142 (TIDRYQKTTRPFKTSNPKNLLGAK) lie on the Cytoplasmic side of the membrane. Residues 143–162 (ILSVLIWAFMFLLSLPNMIL) form a helical membrane-spanning segment. Residues 156–159 (SLPN), 175–179 (CSFLK), histidine 187, and asparagine 191 each bind ADP. The Extracellular segment spans residues 163–185 (TNRRPRDKNVKKCSFLKSEFGLV). Residues 186–207 (WHEIVNYICQVIFWINFLIVIV) form a helical membrane-spanning segment. The Cytoplasmic portion of the chain corresponds to 208-233 (CYTLITKELYRSYVRTRGVGKVPRKK). A helical transmembrane segment spans residues 234 to 259 (VNVKVFIIIAVFFICFVPFHFARIPY). ADP-binding positions include 256–259 (RIPY), glutamine 263, and lysine 280. Residues 260-278 (TLSQTRDVFDCAAENTLFY) are Extracellular-facing. Residues 279–298 (VKESTLWLTSLNACLDPFIY) form a helical membrane-spanning segment. Topologically, residues 299–342 (FFLCKSFRNSLISMLKCPNSATSQSQDNRKKEQDGGDPNEETPM) are cytoplasmic. The interval 317–342 (NSATSQSQDNRKKEQDGGDPNEETPM) is disordered. Acidic residues predominate over residues 333-342 (GGDPNEETPM).

This sequence belongs to the G-protein coupled receptor 1 family.

It localises to the cell membrane. In terms of biological role, receptor for ADP and ATP coupled to G-proteins that inhibit the adenylyl cyclase second messenger system. Required for normal platelet aggregation and blood coagulation. This Macaca fascicularis (Crab-eating macaque) protein is P2Y purinoceptor 12 (P2RY12).